The sequence spans 162 residues: Protein-export protein SecB (162 aa).

This sequence belongs to the SecB family. In terms of assembly, homotetramer, a dimer of dimers. One homotetramer interacts with 1 SecA dimer.

The protein localises to the cytoplasm. Functionally, one of the proteins required for the normal export of preproteins out of the cell cytoplasm. It is a molecular chaperone that binds to a subset of precursor proteins, maintaining them in a translocation-competent state. It also specifically binds to its receptor SecA. In Bradyrhizobium sp. (strain BTAi1 / ATCC BAA-1182), this protein is Protein-export protein SecB.